The chain runs to 171 residues: 3-hydroxydecanoyl-[acyl-carrier-protein] dehydratase (171 aa).

The active site involves His70.

The protein belongs to the thioester dehydratase family. FabA subfamily. In terms of assembly, homodimer.

It localises to the cytoplasm. It catalyses the reaction a (3R)-hydroxyacyl-[ACP] = a (2E)-enoyl-[ACP] + H2O. It carries out the reaction (3R)-hydroxydecanoyl-[ACP] = (2E)-decenoyl-[ACP] + H2O. The catalysed reaction is (2E)-decenoyl-[ACP] = (3Z)-decenoyl-[ACP]. It participates in lipid metabolism; fatty acid biosynthesis. Its function is as follows. Necessary for the introduction of cis unsaturation into fatty acids. Catalyzes the dehydration of (3R)-3-hydroxydecanoyl-ACP to E-(2)-decenoyl-ACP and then its isomerization to Z-(3)-decenoyl-ACP. Can catalyze the dehydratase reaction for beta-hydroxyacyl-ACPs with saturated chain lengths up to 16:0, being most active on intermediate chain length. The sequence is that of 3-hydroxydecanoyl-[acyl-carrier-protein] dehydratase from Shewanella sp. (strain MR-4).